A 51-amino-acid polypeptide reads, in one-letter code: Insulin (51 aa).

3 cysteine pairs are disulfide-bonded: Cys-7–Cys-37, Cys-19–Cys-50, and Cys-36–Cys-41.

This sequence belongs to the insulin family. As to quaternary structure, heterodimer of a B chain and an A chain linked by two disulfide bonds.

The protein localises to the secreted. Functionally, insulin decreases blood glucose concentration. It increases cell permeability to monosaccharides, amino acids and fatty acids. It accelerates glycolysis, the pentose phosphate cycle, and glycogen synthesis in liver. In Ptyas dhumnades (Big-eyed ratsnake), this protein is Insulin (INS).